The primary structure comprises 184 residues: Protein PPLZ12 (184 aa).

In Lupinus polyphyllus (Large-leaved lupine), this protein is Protein PPLZ12 (PPLZ12).